Consider the following 813-residue polypeptide: Ribosome-releasing factor 2, mitochondrial (813 aa).

The N-terminal 20 residues, 1-20, are a transit peptide targeting the mitochondrion; sequence MLRIVWKPLKIRLPVWRRYQ. Residues 26 to 314 form the tr-type G domain; the sequence is NSIRNVGIIA…AIIDYLPSPV (289 aa). GTP-binding positions include 35-42, 99-103, and 153-156; these read AHIDAGKT, DTPGH, and NKMD.

The protein belongs to the TRAFAC class translation factor GTPase superfamily. Classic translation factor GTPase family. EF-G/EF-2 subfamily.

Its subcellular location is the mitochondrion. Its function is as follows. Mitochondrial GTPase that mediates the disassembly of ribosomes from messenger RNA at the termination of mitochondrial protein biosynthesis. Not involved in the GTP-dependent ribosomal translocation step during translation elongation. This is Ribosome-releasing factor 2, mitochondrial (mef2) from Schizosaccharomyces pombe (strain 972 / ATCC 24843) (Fission yeast).